The following is a 287-amino-acid chain: MHSKPPWLRAKAPTGEIFNETLNTVKLHGLHTVCEEAACPNIGECWNKRHATVMILGSVCTRACAFCNVATGIPNKLDPHEPENLAKAIKKLNLKYVVITSVDRDDLPDGGASQFIKCIEEIRKITPETTVEILTPDFLNKKGAFEAIAVASPDVYNHNIEMVPRLYARIRPRARYFHSLYLLKMVKQINPKLLTKSGLMVGLGETKEEVLQVMDDLRSAEVDFITIGQYLQPTPKHAKIDRYVTPEEFEHYKYIAYSKGFLVVASSPLTRSSYHAEEDFNRLKACR.

[4Fe-4S] cluster-binding residues include C34, C39, C45, C60, C64, C67, and S273. The 217-residue stretch at 46–262 (WNKRHATVMI…KYIAYSKGFL (217 aa)) folds into the Radical SAM core domain.

It belongs to the radical SAM superfamily. Lipoyl synthase family. [4Fe-4S] cluster serves as cofactor.

The protein resides in the cytoplasm. It carries out the reaction [[Fe-S] cluster scaffold protein carrying a second [4Fe-4S](2+) cluster] + N(6)-octanoyl-L-lysyl-[protein] + 2 oxidized [2Fe-2S]-[ferredoxin] + 2 S-adenosyl-L-methionine + 4 H(+) = [[Fe-S] cluster scaffold protein] + N(6)-[(R)-dihydrolipoyl]-L-lysyl-[protein] + 4 Fe(3+) + 2 hydrogen sulfide + 2 5'-deoxyadenosine + 2 L-methionine + 2 reduced [2Fe-2S]-[ferredoxin]. The protein operates within protein modification; protein lipoylation via endogenous pathway; protein N(6)-(lipoyl)lysine from octanoyl-[acyl-carrier-protein]: step 2/2. Its function is as follows. Catalyzes the radical-mediated insertion of two sulfur atoms into the C-6 and C-8 positions of the octanoyl moiety bound to the lipoyl domains of lipoate-dependent enzymes, thereby converting the octanoylated domains into lipoylated derivatives. This Wolbachia sp. subsp. Brugia malayi (strain TRS) protein is Lipoyl synthase.